The chain runs to 262 residues: Acyl-[acyl-carrier-protein]--UDP-N-acetylglucosamine O-acyltransferase (262 aa).

This sequence belongs to the transferase hexapeptide repeat family. LpxA subfamily. Homotrimer.

It is found in the cytoplasm. It catalyses the reaction a (3R)-hydroxyacyl-[ACP] + UDP-N-acetyl-alpha-D-glucosamine = a UDP-3-O-[(3R)-3-hydroxyacyl]-N-acetyl-alpha-D-glucosamine + holo-[ACP]. The protein operates within glycolipid biosynthesis; lipid IV(A) biosynthesis; lipid IV(A) from (3R)-3-hydroxytetradecanoyl-[acyl-carrier-protein] and UDP-N-acetyl-alpha-D-glucosamine: step 1/6. Its function is as follows. Involved in the biosynthesis of lipid A, a phosphorylated glycolipid that anchors the lipopolysaccharide to the outer membrane of the cell. The sequence is that of Acyl-[acyl-carrier-protein]--UDP-N-acetylglucosamine O-acyltransferase from Paraburkholderia xenovorans (strain LB400).